Consider the following 185-residue polypeptide: Serine/arginine-rich splicing factor RSZ21 (185 aa).

One can recognise an RRM domain in the interval A2 to S73. Residues M86–L103 form a CCHC-type zinc finger. Positions R104 to S185 are disordered. Residues G113–S123 show a composition bias toward basic residues. Low complexity-rich tracts occupy residues R124–S138 and V151–S162.

Belongs to the splicing factor SR family. Post-translationally, extensively phosphorylated on serine residues in the RS domain. Expressed in roots, leaves and immature seeds.

The protein localises to the nucleus. Its function is as follows. Involved in pre-mRNA splicing. This Oryza sativa subsp. japonica (Rice) protein is Serine/arginine-rich splicing factor RSZ21 (RSZP21).